The chain runs to 308 residues: Carbamate kinase (308 aa).

Belongs to the carbamate kinase family.

The protein resides in the cytoplasm. It catalyses the reaction hydrogencarbonate + NH4(+) + ATP = carbamoyl phosphate + ADP + H2O + H(+). In Synechocystis sp. (strain ATCC 27184 / PCC 6803 / Kazusa), this protein is Carbamate kinase.